The primary structure comprises 115 residues: Chorion protein S15 (115 aa).

The signal sequence occupies residues Met1–Ala18.

This sequence belongs to the chorion protein S15/S18 family.

The protein resides in the secreted. Chorion membrane (egg shell) protein; plays a role in protecting the egg from the environment. This is Chorion protein S15 (Cp15) from Drosophila melanogaster (Fruit fly).